A 569-amino-acid polypeptide reads, in one-letter code: Probable protein phosphatase 2C BIPP2C1 (569 aa).

Disordered stretches follow at residues 120–214 (EVSP…KVTG) and 251–279 (SLDDSEASDGSTTQDFDTDVETESSGSSI). Residues 179 to 188 (ESERGSDADG) show a composition bias toward basic and acidic residues. A PPM-type phosphatase domain is found at 329-564 (AAMLPHPSKV…DDVTVVVSVV (236 aa)). Residues D358, G359, D488, and D555 each contribute to the Mn(2+) site.

The protein belongs to the PP2C family. Requires Mg(2+) as cofactor. Mn(2+) serves as cofactor.

It catalyses the reaction O-phospho-L-seryl-[protein] + H2O = L-seryl-[protein] + phosphate. The catalysed reaction is O-phospho-L-threonyl-[protein] + H2O = L-threonyl-[protein] + phosphate. Functionally, may play a role in responses to biotic and abiotic stresses. The polypeptide is Probable protein phosphatase 2C BIPP2C1 (BIPP2C1) (Oryza sativa subsp. japonica (Rice)).